The primary structure comprises 55 residues: Large ribosomal subunit protein bL33 (55 aa).

This sequence belongs to the bacterial ribosomal protein bL33 family.

The sequence is that of Large ribosomal subunit protein bL33 from Chelativorans sp. (strain BNC1).